The sequence spans 232 residues: Protein fmp52-1, mitochondrial (232 aa).

The N-terminal 36 residues, 1–36 (MASVALIGCTGMVGSHILTSLLAHPSVARVDTISRR), are a transit peptide targeting the mitochondrion.

This sequence belongs to the FMP52 family.

It is found in the mitochondrion outer membrane. The chain is Protein fmp52-1, mitochondrial (fmp521) from Aspergillus terreus (strain NIH 2624 / FGSC A1156).